The following is a 384-amino-acid chain: Thylakoid membrane protein TERC, chloroplastic (384 aa).

Residues 1–48 (MSLASVIHHGILPPAKSDRIFLTIPVFPPDFRARGWTKSPFSLLINPS) constitute a chloroplast transit peptide. Residues 49–115 (LASAANRRLS…DYQQEETYKT (67 aa)) lie on the Stromal side of the membrane. Residues 68 to 104 (GIDQEDEEKESRELLPHKNDENATTSRSSSSVDSGGL) are disordered. Positions 76–88 (KESRELLPHKNDE) are enriched in basic and acidic residues. Residues 116–136 (SFKTVALCVGTAVAFGIGIGL) form a helical membrane-spanning segment. Residues 137–145 (KEGVGKASE) lie on the Lumenal, thylakoid side of the membrane. The chain crosses the membrane as a helical span at residues 146–166 (FFAGYILEQSLSVDNLFVFVL). Over 167–180 (VFKYFKVPLMYQNK) the chain is Stromal. Residues 181 to 201 (VLTYGIAGAIVFRFTLILLGT) form a helical membrane-spanning segment. Residues 202–206 (ATLQK) are Lumenal, thylakoid-facing. A helical membrane pass occupies residues 207-227 (FEAVNLLLAAVLLYSSFKLFA). Residues 228-275 (SEEDDTDLSDNFIVKTCQRFIPVTSSYDGNRFFTKHDGILKATPLLLT) are Stromal-facing. Residues 276–296 (VAVIELSDIAFAVDSIPAVFG) traverse the membrane as a helical segment. At 297-301 (VTRDP) the chain is on the lumenal, thylakoid side. The chain crosses the membrane as a helical span at residues 302-322 (FIVLTSNLFAILGLRSLYTLI). The Stromal segment spans residues 323–335 (SEGMDELEYLQPS). Residues 336 to 356 (IAVVLGFIGVKMILDFFGFHI) traverse the membrane as a helical segment. Serine 357 is a topological domain (lumenal, thylakoid). Residues 358–378 (TEASLGVVALSLSTGVLLSLT) traverse the membrane as a helical segment. Residues 379–384 (NKSSDS) are Stromal-facing.

In terms of assembly, interacts with ALB3. In terms of tissue distribution, expressed in roots, rosette and cauline leaves, stems and flowers.

Its subcellular location is the plastid. It is found in the chloroplast thylakoid membrane. Functionally, integral thylakoid membrane protein that plays a crucial role in thylakoid membrane biogenesis and thylakoid formation in early chloroplast development. Is essential for de novo synthesis of photosystem II (PSII) core proteins and required for efficient insertion of thylakoid membrane proteins, presumably via interaction with ALB3. May assist synthesis of thylakoid membrane proteins at the membrane insertion step. The protein is Thylakoid membrane protein TERC, chloroplastic of Arabidopsis thaliana (Mouse-ear cress).